Consider the following 355-residue polypeptide: Phosphoserine aminotransferase (355 aa).

Residue R41 participates in L-glutamate binding. Residues 75-76, W99, T147, D166, and Q189 contribute to the pyridoxal 5'-phosphate site; that span reads AS. At K190 the chain carries N6-(pyridoxal phosphate)lysine. 231–232 provides a ligand contact to pyridoxal 5'-phosphate; the sequence is NT.

It belongs to the class-V pyridoxal-phosphate-dependent aminotransferase family. SerC subfamily. As to quaternary structure, homodimer. The cofactor is pyridoxal 5'-phosphate.

Its subcellular location is the cytoplasm. The catalysed reaction is O-phospho-L-serine + 2-oxoglutarate = 3-phosphooxypyruvate + L-glutamate. It catalyses the reaction 4-(phosphooxy)-L-threonine + 2-oxoglutarate = (R)-3-hydroxy-2-oxo-4-phosphooxybutanoate + L-glutamate. It participates in amino-acid biosynthesis; L-serine biosynthesis; L-serine from 3-phospho-D-glycerate: step 2/3. The protein operates within cofactor biosynthesis; pyridoxine 5'-phosphate biosynthesis; pyridoxine 5'-phosphate from D-erythrose 4-phosphate: step 3/5. Its function is as follows. Catalyzes the reversible conversion of 3-phosphohydroxypyruvate to phosphoserine and of 3-hydroxy-2-oxo-4-phosphonooxybutanoate to phosphohydroxythreonine. In Bacteroides fragilis (strain ATCC 25285 / DSM 2151 / CCUG 4856 / JCM 11019 / LMG 10263 / NCTC 9343 / Onslow / VPI 2553 / EN-2), this protein is Phosphoserine aminotransferase.